Here is a 169-residue protein sequence, read N- to C-terminus: Monothiol glutaredoxin-S15, mitochondrial (169 aa).

The transit peptide at 1-37 directs the protein to the mitochondrion; that stretch reads MAASLSSRLIKGIANLKAVRSSRLTSASVYQNGMMRF. Positions 38–61 are disordered; that stretch reads SSTVPSDSDTHDDFKPTQKVPPDS. The Glutaredoxin domain maps to 66 to 168; that stretch reads KDIVENDVKD…QKLKDVSGNQ (103 aa). Lys-83 contacts glutathione. Cys-91 contacts [2Fe-2S] cluster. Residues Lys-120, Phe-132, and 145–146 each bind glutathione; that span reads SD.

This sequence belongs to the glutaredoxin family. CGFS subfamily. As to quaternary structure, [2Fe-2S]-bridged holo-homodimer. Interacts in vitro with SUFE1, BOLA1, BOLA2 and BOLA4. Interacts in vivo only with BOLA4.

Its subcellular location is the mitochondrion. In terms of biological role, may only reduce GSH-thiol disulfides, but not protein disulfides. Participates probably to the maturation of iron-sulfur proteins and to the regulation of the redox state of the BOLA proteins. This is Monothiol glutaredoxin-S15, mitochondrial from Arabidopsis thaliana (Mouse-ear cress).